We begin with the raw amino-acid sequence, 141 residues long: Small ribosomal subunit protein bS16 (141 aa).

Positions 84–141 are disordered; it reads TRKARSNPEKSKPKAKAQERLEAARMAEEEAAAAAKAAAEAPAEEAPAAEAPAEEAQA. Residues 89–111 show a composition bias toward basic and acidic residues; the sequence is SNPEKSKPKAKAQERLEAARMAE. A compositionally biased stretch (low complexity) spans 115–141; the sequence is AAAAKAAAEAPAEEAPAAEAPAEEAQA.

This sequence belongs to the bacterial ribosomal protein bS16 family.

This Parvibaculum lavamentivorans (strain DS-1 / DSM 13023 / NCIMB 13966) protein is Small ribosomal subunit protein bS16.